We begin with the raw amino-acid sequence, 406 residues long: Serine/threonine transporter SstT (406 aa).

Transmembrane regions (helical) follow at residues 15 to 35, 47 to 67, 81 to 101, 140 to 160, 191 to 211, 215 to 235, 289 to 309, 315 to 335, and 362 to 382; these read LVLQ…VSPS, FVGA…AASI, IIAM…VLSF, ALMS…GLAL, FGIF…ALAG, LLVV…PAMV, IPLG…TLTL, MGIE…AVSA, and IAMQ…SAET.

This sequence belongs to the dicarboxylate/amino acid:cation symporter (DAACS) (TC 2.A.23) family.

The protein resides in the cell inner membrane. The enzyme catalyses L-serine(in) + Na(+)(in) = L-serine(out) + Na(+)(out). It carries out the reaction L-threonine(in) + Na(+)(in) = L-threonine(out) + Na(+)(out). Involved in the import of serine and threonine into the cell, with the concomitant import of sodium (symport system). This chain is Serine/threonine transporter SstT, found in Vibrio vulnificus (strain CMCP6).